We begin with the raw amino-acid sequence, 465 residues long: Phenylalanine--tRNA ligase alpha subunit (465 aa).

Residues Thr309, 348–350 (QLD), and Phe388 contribute to the L-phenylalanine site. Glu390 provides a ligand contact to Mg(2+).

It belongs to the class-II aminoacyl-tRNA synthetase family. Phe-tRNA synthetase alpha subunit type 2 subfamily. Tetramer of two alpha and two beta subunits. It depends on Mg(2+) as a cofactor.

The protein localises to the cytoplasm. The catalysed reaction is tRNA(Phe) + L-phenylalanine + ATP = L-phenylalanyl-tRNA(Phe) + AMP + diphosphate + H(+). The sequence is that of Phenylalanine--tRNA ligase alpha subunit from Sulfolobus acidocaldarius (strain ATCC 33909 / DSM 639 / JCM 8929 / NBRC 15157 / NCIMB 11770).